The sequence spans 702 residues: Lipase maturation factor 2 (702 aa).

10 consecutive transmembrane segments (helical) span residues 10 to 30 (LFLQGVAAVYLFAFASLYTQI), 75 to 95 (AQGLDLLTLLGTVLALGALLL), 102 to 122 (FIYLLLWAAYLSACQVGQVFL), 123 to 143 (YFQWDSLLLETGFLAILVAPL), 164 to 184 (DLPFWLVRWLLFRLMFASGVV), 226 to 246 (LSVVATFLIEIAVPPLFFAPI), 259 to 279 (LLQILIIITGNYNFFNLLTLV), 316 to 336 (LMLELTVYGLLAYGTIYYFGL), 363 to 383 (VTLPTVWLGTASLAWELLIAL), and 396 to 416 (FFAGIQLSVLGTATVFLFLIS). Asn-488 carries N-linked (GlcNAc...) asparagine glycosylation. A helical transmembrane segment spans residues 628–648 (QLSPLEPSILLWGLLGAVVAI). The interval 660-702 (LQSSKQTREEKRKQAPKKDSRAVSEQTAPNSNSNGSWAPRRKK) is disordered. Residues 665-681 (QTREEKRKQAPKKDSRA) are compositionally biased toward basic and acidic residues. Residues 682–695 (VSEQTAPNSNSNGS) are compositionally biased toward polar residues.

Belongs to the lipase maturation factor family.

Its subcellular location is the endoplasmic reticulum membrane. In terms of biological role, involved in the maturation of specific proteins in the endoplasmic reticulum. May be required for maturation and transport of active lipoprotein lipase (LPL) through the secretory pathway. The protein is Lipase maturation factor 2 (Lmf2) of Rattus norvegicus (Rat).